Consider the following 429-residue polypeptide: Glutamate-1-semialdehyde 2,1-aminomutase (429 aa).

Lys265 is subject to N6-(pyridoxal phosphate)lysine.

This sequence belongs to the class-III pyridoxal-phosphate-dependent aminotransferase family. HemL subfamily. In terms of assembly, homodimer. It depends on pyridoxal 5'-phosphate as a cofactor.

The protein localises to the cytoplasm. It catalyses the reaction (S)-4-amino-5-oxopentanoate = 5-aminolevulinate. It functions in the pathway porphyrin-containing compound metabolism; protoporphyrin-IX biosynthesis; 5-aminolevulinate from L-glutamyl-tRNA(Glu): step 2/2. The polypeptide is Glutamate-1-semialdehyde 2,1-aminomutase (Legionella pneumophila (strain Corby)).